Consider the following 184-residue polypeptide: UPF0179 protein Pcal_2106 (184 aa).

The segment covering 146–161 has biased composition (low complexity); it reads GASSAGISQAPSRVPL. The interval 146-184 is disordered; that stretch reads GASSAGISQAPSRVPLSKPPSKSPSPQKSSPRGPTSRLP.

Belongs to the UPF0179 family.

The protein is UPF0179 protein Pcal_2106 of Pyrobaculum calidifontis (strain DSM 21063 / JCM 11548 / VA1).